The chain runs to 477 residues: Glutamate--tRNA ligase (477 aa).

The 'HIGH' region motif lies at 8–18; sequence PSPTGTLHIGT. The 'KMSKS' region signature appears at 247-251; sequence KLSKR. Residue Lys-250 participates in ATP binding.

This sequence belongs to the class-I aminoacyl-tRNA synthetase family. Glutamate--tRNA ligase type 1 subfamily. Monomer.

It localises to the cytoplasm. The enzyme catalyses tRNA(Glu) + L-glutamate + ATP = L-glutamyl-tRNA(Glu) + AMP + diphosphate. In terms of biological role, catalyzes the attachment of glutamate to tRNA(Glu) in a two-step reaction: glutamate is first activated by ATP to form Glu-AMP and then transferred to the acceptor end of tRNA(Glu). This Synechococcus sp. (strain CC9902) protein is Glutamate--tRNA ligase.